Reading from the N-terminus, the 289-residue chain is Bis(5'-nucleosyl)-tetraphosphatase, symmetrical (289 aa).

The protein belongs to the Ap4A hydrolase family.

It catalyses the reaction P(1),P(4)-bis(5'-adenosyl) tetraphosphate + H2O = 2 ADP + 2 H(+). Hydrolyzes diadenosine 5',5'''-P1,P4-tetraphosphate to yield ADP. In Yersinia pseudotuberculosis serotype O:1b (strain IP 31758), this protein is Bis(5'-nucleosyl)-tetraphosphatase, symmetrical.